We begin with the raw amino-acid sequence, 316 residues long: Aspartate carbamoyltransferase catalytic subunit (316 aa).

Carbamoyl phosphate-binding residues include R58 and T59. Residue K86 participates in L-aspartate binding. Positions 108, 136, and 139 each coordinate carbamoyl phosphate. L-aspartate contacts are provided by R169 and R223. Residues G264 and P265 each coordinate carbamoyl phosphate.

It belongs to the aspartate/ornithine carbamoyltransferase superfamily. ATCase family. As to quaternary structure, heterododecamer (2C3:3R2) of six catalytic PyrB chains organized as two trimers (C3), and six regulatory PyrI chains organized as three dimers (R2).

The catalysed reaction is carbamoyl phosphate + L-aspartate = N-carbamoyl-L-aspartate + phosphate + H(+). The protein operates within pyrimidine metabolism; UMP biosynthesis via de novo pathway; (S)-dihydroorotate from bicarbonate: step 2/3. Its function is as follows. Catalyzes the condensation of carbamoyl phosphate and aspartate to form carbamoyl aspartate and inorganic phosphate, the committed step in the de novo pyrimidine nucleotide biosynthesis pathway. This chain is Aspartate carbamoyltransferase catalytic subunit, found in Dinoroseobacter shibae (strain DSM 16493 / NCIMB 14021 / DFL 12).